The chain runs to 489 residues: Rhamnulokinase (489 aa).

Residue 13–17 (ASSGR) coordinates ATP. Cys68 and Cys222 form a disulfide bridge. Residues Gly83 and 236–238 (HDT) contribute to the substrate site. Residue Asp237 is the Proton acceptor of the active site. ATP is bound at residue Thr259. Asn296 provides a ligand contact to substrate. Gln304 is a binding site for ATP. Cysteines 353 and 370 form a disulfide. Gly402 contacts ATP. Cys413 and Cys417 form a disulfide bridge.

Belongs to the rhamnulokinase family. The cofactor is Mg(2+).

It catalyses the reaction L-rhamnulose + ATP = L-rhamnulose 1-phosphate + ADP + H(+). The protein operates within carbohydrate degradation; L-rhamnose degradation; glycerone phosphate from L-rhamnose: step 2/3. Its function is as follows. Involved in the catabolism of L-rhamnose (6-deoxy-L-mannose). Catalyzes the transfer of the gamma-phosphate group from ATP to the 1-hydroxyl group of L-rhamnulose to yield L-rhamnulose 1-phosphate. In Salmonella choleraesuis (strain SC-B67), this protein is Rhamnulokinase.